A 534-amino-acid chain; its full sequence is Steroid hormone receptor family member cnr14 (534 aa).

Disordered stretches follow at residues 30-53 (SGKTASIPSSEASKPEGTNGQWSH) and 119-139 (PATSVTSSLSPPDSLSNGHTT). Over residues 119-130 (PATSVTSSLSPP) the composition is skewed to low complexity. The segment at residues 148–223 (ISFCKVCGDK…SGMSKDSVRQ (76 aa)) is a DNA-binding region (nuclear receptor). NR C4-type zinc fingers lie at residues 151–171 (CKVCGDKASGYHYGVTSCEGC) and 187–211 (CLKQQVCEIKRESRNRCQYCRFKKC). One can recognise an NR LBD domain in the interval 252–493 (EVDAVYEAVL…PPLVVEMFQL (242 aa)). The tract at residues 502–534 (HNNQENQYTPAPEHQSPQPQQPTPNQQQTPVHC) is disordered. Positions 511-534 (PAPEHQSPQPQQPTPNQQQTPVHC) are enriched in low complexity.

This sequence belongs to the nuclear hormone receptor family. NR1 subfamily. In terms of tissue distribution, most abundant in embryos.

It localises to the nucleus. Transcriptional regulator which is involved in the sex determination and X chromosome dosage compensation pathways. Directly binds to five 5'-A(G/C)(G/T)(T/G)C(A/G)-3' sites in the promoter of sex-determining factor xol-1 to negatively regulate its expression and promote hermaphrodite development. Together with fox-1 is involved in making the distinction between one and two X-chromosomes. Plays a role in the fox-1-mediated repression of the functionally active isoform (isoform b) of the sex-determining factor xol-1 gene to promote hermaphrodite development. Plays a role in the association of the dosage compensation complex proteins dpy-27 and sdc-3 with the hermaphrodite X chromosomes. In Caenorhabditis elegans, this protein is Steroid hormone receptor family member cnr14.